The chain runs to 213 residues: Small ribosomal subunit protein uS3 (213 aa).

Residues 38–106 (IRSYIKKLLY…EFSLEVTEVR (69 aa)) enclose the KH type-2 domain.

This sequence belongs to the universal ribosomal protein uS3 family. As to quaternary structure, part of the 30S ribosomal subunit. Forms a tight complex with proteins S10 and S14.

Its function is as follows. Binds the lower part of the 30S subunit head. Binds mRNA in the 70S ribosome, positioning it for translation. The polypeptide is Small ribosomal subunit protein uS3 (Lawsonia intracellularis (strain PHE/MN1-00)).